A 121-amino-acid chain; its full sequence is Small ribosomal subunit protein uS13 (121 aa).

A disordered region spans residues arginine 93–lysine 121. Over residues alanine 106–lysine 121 the composition is skewed to basic residues.

Belongs to the universal ribosomal protein uS13 family. In terms of assembly, part of the 30S ribosomal subunit. Forms a loose heterodimer with protein S19. Forms two bridges to the 50S subunit in the 70S ribosome.

Functionally, located at the top of the head of the 30S subunit, it contacts several helices of the 16S rRNA. In the 70S ribosome it contacts the 23S rRNA (bridge B1a) and protein L5 of the 50S subunit (bridge B1b), connecting the 2 subunits; these bridges are implicated in subunit movement. Contacts the tRNAs in the A and P-sites. The sequence is that of Small ribosomal subunit protein uS13 from Streptococcus uberis (strain ATCC BAA-854 / 0140J).